Consider the following 308-residue polypeptide: Phenylcoumaran benzylic ether reductase PT1 (308 aa).

NADP(+) contacts are provided by residues 11-17, Arg-36, and Lys-46; that span reads GATGYIG. Lys-134 serves as the catalytic Proton acceptor. Arg-138 provides a ligand contact to NADP(+).

This sequence belongs to the NmrA-type oxidoreductase family. Isoflavone reductase subfamily.

It catalyses the reaction (-)-dehydrodiconiferyl alcohol + NADPH + H(+) = (S)-isodihydrodehydrodiconiferyl alcohol + NADP(+). The catalysed reaction is (+)-dehydrodiconiferyl alcohol + NADPH + H(+) = (R)-isodihydrodehydrodiconiferyl alcohol + NADP(+). It carries out the reaction (2R,3S)-dihydrodehydrodiconiferyl alcohol + NADPH + H(+) = (S)-tetrahydrodehydrodiconiferyl alcohol + NADP(+). The enzyme catalyses (2S,3R)-dihydrodehydrodiconiferyl alcohol + NADPH + H(+) = (R)-tetrahydrodehydrodiconiferyl alcohol + NADP(+). Its function is as follows. Oxidoreductase involved in lignan biosynthesis. Catalyzes the NADPH-dependent reduction of phenylcoumaran benzylic ethers. Converts dehydrodiconiferyl alcohol (DDC) to isodihydrodehydrodiconiferyl alcohol (IDDDC), and dihydrodehydrodiconiferyl alcohol (DDDC) to tetrahydrodehydrodiconiferyl alcohol (TDDC). The protein is Phenylcoumaran benzylic ether reductase PT1 of Pinus taeda (Loblolly pine).